The following is a 473-amino-acid chain: Photosystem II CP43 reaction center protein (473 aa).

The propeptide occupies 1–14 (MKTLYSPRRFYPVE). T15 bears the N-acetylthreonine mark. At T15 the chain carries Phosphothreonine. 5 consecutive transmembrane segments (helical) span residues 69 to 93 (LFEV…PHLA), 134 to 155 (LIGP…KDRN), 178 to 200 (KALF…RKIT), 255 to 275 (KPFA…LSYS), and 291 to 312 (WFNN…ASQA). Residue E367 coordinates [CaMn4O5] cluster. The helical transmembrane segment at 447–471 (RARAAAAGFEKGIDRDLEPVLFMTP) threads the bilayer.

Belongs to the PsbB/PsbC family. PsbC subfamily. In terms of assembly, PSII is composed of 1 copy each of membrane proteins PsbA, PsbB, PsbC, PsbD, PsbE, PsbF, PsbH, PsbI, PsbJ, PsbK, PsbL, PsbM, PsbT, PsbX, PsbY, PsbZ, Psb30/Ycf12, at least 3 peripheral proteins of the oxygen-evolving complex and a large number of cofactors. It forms dimeric complexes. It depends on Binds multiple chlorophylls and provides some of the ligands for the Ca-4Mn-5O cluster of the oxygen-evolving complex. It may also provide a ligand for a Cl- that is required for oxygen evolution. PSII binds additional chlorophylls, carotenoids and specific lipids. as a cofactor.

Its subcellular location is the plastid. It localises to the chloroplast thylakoid membrane. In terms of biological role, one of the components of the core complex of photosystem II (PSII). It binds chlorophyll and helps catalyze the primary light-induced photochemical processes of PSII. PSII is a light-driven water:plastoquinone oxidoreductase, using light energy to abstract electrons from H(2)O, generating O(2) and a proton gradient subsequently used for ATP formation. This chain is Photosystem II CP43 reaction center protein, found in Gnetum parvifolium (Small-leaved jointfir).